A 133-amino-acid chain; its full sequence is Holo-[acyl-carrier-protein] synthase (133 aa).

Positions 8 and 56 each coordinate Mg(2+).

The protein belongs to the P-Pant transferase superfamily. AcpS family. Mg(2+) serves as cofactor.

Its subcellular location is the cytoplasm. It carries out the reaction apo-[ACP] + CoA = holo-[ACP] + adenosine 3',5'-bisphosphate + H(+). Functionally, transfers the 4'-phosphopantetheine moiety from coenzyme A to a Ser of acyl-carrier-protein. In Clostridium perfringens (strain ATCC 13124 / DSM 756 / JCM 1290 / NCIMB 6125 / NCTC 8237 / Type A), this protein is Holo-[acyl-carrier-protein] synthase.